Consider the following 211-residue polypeptide: Envelope protein UL45 homolog (211 aa).

Residues 1 to 46 are Intravirion-facing; the sequence is MMSPTPEDDRDLVVVRGRLRMMDNGAEHDRERRSYTAWPHLCCGCT. Residues 47–67 form a helical; Signal-anchor for type II membrane protein membrane-spanning segment; it reads IGIILTMFVIATTLLLASLFA. At 68-211 the chain is on the virion surface side; sequence FSYMSLESGT…SSILSNAIMK (144 aa). N-linked (GlcNAc...) asparagine; by host glycans are attached at residues N96 and N133.

The protein belongs to the herpesviridae HHV-1 UL45 family.

Its subcellular location is the virion membrane. In Gallid herpesvirus 2 (strain Chicken/Md5/ATCC VR-987) (GaHV-2), this protein is Envelope protein UL45 homolog (UL45H).